The following is a 342-amino-acid chain: Eukaryotic translation initiation factor 3 subunit F (342 aa).

Residues 30-166 (VAIQPQAVFS…SRTYISAPIG (137 aa)) enclose the MPN domain. Residues 310–342 (TDALAGDGQKDGGDRKQGGDRRNKGRQQRTQEA) are disordered. The segment covering 317–331 (GQKDGGDRKQGGDRR) has biased composition (basic and acidic residues).

It belongs to the eIF-3 subunit F family. In terms of assembly, component of the eukaryotic translation initiation factor 3 (eIF-3) complex.

It localises to the cytoplasm. Component of the eukaryotic translation initiation factor 3 (eIF-3) complex, which is involved in protein synthesis of a specialized repertoire of mRNAs and, together with other initiation factors, stimulates binding of mRNA and methionyl-tRNAi to the 40S ribosome. The eIF-3 complex specifically targets and initiates translation of a subset of mRNAs involved in cell proliferation. The protein is Eukaryotic translation initiation factor 3 subunit F of Phaeosphaeria nodorum (strain SN15 / ATCC MYA-4574 / FGSC 10173) (Glume blotch fungus).